A 474-amino-acid polypeptide reads, in one-letter code: Cytochrome c-552 (474 aa).

The signal sequence occupies residues 1–29 (MSIKHWMASSVSVTALVMTALLNITAVSA). Residue His-91 participates in heme c binding. The heme site is built by Cys-119, Cys-122, and Lys-123. Residues Cys-157, Cys-160, His-161, Cys-206, Cys-209, and His-210 each contribute to the heme c site. The Ca(2+) site is built by Glu-212, Tyr-213, Lys-258, and Gln-260. A substrate-binding site is contributed by Tyr-213. His-261 contributes to the substrate binding site. Heme c is bound by residues His-272, Cys-279, Cys-282, His-283, His-298, Cys-311, Cys-314, His-315, and His-390.

The protein belongs to the cytochrome c-552 family. Ca(2+) serves as cofactor. Heme c is required as a cofactor.

It localises to the periplasm. The enzyme catalyses 6 Fe(III)-[cytochrome c] + NH4(+) + 2 H2O = 6 Fe(II)-[cytochrome c] + nitrite + 8 H(+). The protein operates within nitrogen metabolism; nitrate reduction (assimilation). Catalyzes the reduction of nitrite to ammonia, consuming six electrons in the process. The protein is Cytochrome c-552 of Vibrio vulnificus (strain CMCP6).